The primary structure comprises 389 residues: E3 ubiquitin-protein ligase E3D (389 aa).

Position 2 is an N-acetylalanine (A2). Positions 129–159 match the BRAT1-like motif motif; the sequence is PLPSENWGALVGEWCCHPDPFANKSLHPQEN. C144 contacts Zn(2+). The interval 235–257 is interaction with UBE2C; the sequence is QSSERSFPIIPRSWFVQSVIAQC. An HECT-like region spans residues 353–389; that stretch reads LPSATCLELLLILSKSNANLPSSLRRVNSFQVAFLKM.

As to quaternary structure, interacts with UBE2C/UbcH10 (E2 ubiquitin-conjugating enzyme). In vitro, interacts with cyclin-B. Ubiquitinated by UBCH10 (E2 ubiquitin-conjugating enzyme).

Its subcellular location is the cytoplasm. The catalysed reaction is S-ubiquitinyl-[E2 ubiquitin-conjugating enzyme]-L-cysteine + [acceptor protein]-L-lysine = [E2 ubiquitin-conjugating enzyme]-L-cysteine + N(6)-ubiquitinyl-[acceptor protein]-L-lysine.. Its pathway is protein modification; protein ubiquitination. Its function is as follows. E3 ubiquitin-protein ligase which accepts ubiquitin from specific E2 ubiquitin-conjugating enzymes, and transfers it to substrates, generally promoting their degradation by the proteasome. Independently of its E3 ubiquitin-protein ligase activity, acts as an inhibitor of CPSF3 endonuclease activity by blocking CPSF3 active site. The polypeptide is E3 ubiquitin-protein ligase E3D (UBE3D) (Homo sapiens (Human)).